The sequence spans 362 residues: Methylthioribose-1-phosphate isomerase (362 aa).

Residue D252 is the Proton donor of the active site.

It belongs to the eIF-2B alpha/beta/delta subunits family. MtnA subfamily.

Its subcellular location is the cytoplasm. The protein resides in the nucleus. It catalyses the reaction 5-(methylsulfanyl)-alpha-D-ribose 1-phosphate = 5-(methylsulfanyl)-D-ribulose 1-phosphate. It functions in the pathway amino-acid biosynthesis; L-methionine biosynthesis via salvage pathway; L-methionine from S-methyl-5-thio-alpha-D-ribose 1-phosphate: step 1/6. Its function is as follows. Catalyzes the interconversion of methylthioribose-1-phosphate (MTR-1-P) into methylthioribulose-1-phosphate (MTRu-1-P). The sequence is that of Methylthioribose-1-phosphate isomerase from Drosophila pseudoobscura pseudoobscura (Fruit fly).